A 232-amino-acid chain; its full sequence is Pseudaminic acid cytidylyltransferase (232 aa).

This sequence belongs to the CMP-NeuNAc synthase family. Requires Mg(2+) as cofactor.

It carries out the reaction pseudaminate + CTP = CMP-pseudaminate + diphosphate. Its function is as follows. Catalyzes the final step in the biosynthesis of pseudaminic acid, a sialic-acid-like sugar that is used to modify flagellin. Mediates the activation of pseudaminic acid with CMP by forming CMP-pseudaminic acid. The sequence is that of Pseudaminic acid cytidylyltransferase (pseF) from Campylobacter jejuni subsp. jejuni serotype O:2 (strain ATCC 700819 / NCTC 11168).